A 422-amino-acid chain; its full sequence is Protein king tubby 2 (422 aa).

The disordered stretch occupies residues 49–169 (PSNPDQIISS…ASGHNDAEGD (121 aa)). A compositionally biased stretch (low complexity) spans 57-81 (SSGSPTTVTATGTTTGSVTTTPTSP).

Belongs to the TUB family.

The protein resides in the cytoplasm. It localises to the nucleus. In Culex quinquefasciatus (Southern house mosquito), this protein is Protein king tubby 2 (king-tubby2).